The primary structure comprises 193 residues: uncharacterized protein (193 aa).

A run of 3 helical transmembrane segments spans residues 5 to 25, 63 to 83, and 90 to 110; these read LILL…FIIF, IFIL…LINI, and ILTF…LTPA.

Its subcellular location is the cell membrane. This is an uncharacterized protein from Methanocaldococcus jannaschii (strain ATCC 43067 / DSM 2661 / JAL-1 / JCM 10045 / NBRC 100440) (Methanococcus jannaschii).